A 58-amino-acid chain; its full sequence is Small ribosomal subunit protein eS31 (58 aa).

Zn(2+) contacts are provided by cysteine 29, cysteine 32, cysteine 48, and cysteine 51. The segment at 29–51 (CPRCGSFMAHHLKPVPRWHCGKC) adopts a C4-type zinc-finger fold.

Belongs to the eukaryotic ribosomal protein eS31 family. In terms of assembly, part of the 30S ribosomal subunit. It depends on Zn(2+) as a cofactor.

This chain is Small ribosomal subunit protein eS31, found in Ignicoccus hospitalis (strain KIN4/I / DSM 18386 / JCM 14125).